The primary structure comprises 716 residues: Fatty acid oxidation complex subunit alpha (716 aa).

Residues 1–189 (MIYQSPTIQV…KVGAVDSVVA (189 aa)) are enoyl-CoA hydratase/isomerase. Aspartate 296 serves as a coordination point for substrate. The 3-hydroxyacyl-CoA dehydrogenase stretch occupies residues 311–716 (KEVNNAAVLG…AANNGSYYQA (406 aa)). NAD(+)-binding positions include methionine 324, aspartate 343, 400-402 (VVE), lysine 407, and serine 429. The active-site For 3-hydroxyacyl-CoA dehydrogenase activity is histidine 450. Residue asparagine 453 participates in NAD(+) binding. Residues asparagine 500 and tyrosine 660 each coordinate substrate.

This sequence in the N-terminal section; belongs to the enoyl-CoA hydratase/isomerase family. The protein in the C-terminal section; belongs to the 3-hydroxyacyl-CoA dehydrogenase family. As to quaternary structure, heterotetramer of two alpha chains (FadB) and two beta chains (FadA).

The enzyme catalyses a (3S)-3-hydroxyacyl-CoA + NAD(+) = a 3-oxoacyl-CoA + NADH + H(+). The catalysed reaction is a (3S)-3-hydroxyacyl-CoA = a (2E)-enoyl-CoA + H2O. It catalyses the reaction a 4-saturated-(3S)-3-hydroxyacyl-CoA = a (3E)-enoyl-CoA + H2O. It carries out the reaction (3S)-3-hydroxybutanoyl-CoA = (3R)-3-hydroxybutanoyl-CoA. The enzyme catalyses a (3Z)-enoyl-CoA = a 4-saturated (2E)-enoyl-CoA. The catalysed reaction is a (3E)-enoyl-CoA = a 4-saturated (2E)-enoyl-CoA. It participates in lipid metabolism; fatty acid beta-oxidation. Its function is as follows. Involved in the aerobic and anaerobic degradation of long-chain fatty acids via beta-oxidation cycle. Catalyzes the formation of 3-oxoacyl-CoA from enoyl-CoA via L-3-hydroxyacyl-CoA. It can also use D-3-hydroxyacyl-CoA and cis-3-enoyl-CoA as substrate. The sequence is that of Fatty acid oxidation complex subunit alpha from Shewanella baltica (strain OS185).